The chain runs to 479 residues: PTS system sucrose-specific EIIBC component (479 aa).

In terms of domain architecture, PTS EIIB type-1 spans 4 to 87 (PAVAKELLTL…AKLTGMSEMS (84 aa)). The Phosphocysteine intermediate; for EIIB activity role is filled by Cys26. Transmembrane regions (helical) follow at residues 112–132 (IFVPIIPAIVAGGLLMGIYNL), 158–178 (MINTFANAPFVYLPILLAFSA), 182–202 (FGGNPYLGAALGMLMVHPDLL), 204–224 (GWGFGGASVSGNIPVWNILGF), 232–252 (QGSVLPVLVSAFILAKVELGL), 264–284 (LTPLLAIFIAGLLTFTVVGPF), 303–323 (AGFVGGAVFGLIYAPFVITGM), 345–365 (FIFPIAAMSNVSQGAAALAVG), 376–396 (IAIPSGVTGLLGITEPAMFGV), 403–423 (PFIAAVCAAALSSAFITMFNV), and 448–468 (IAGMVIAFLTAFVLTIVLGIG). The PTS EIIC type-1 domain maps to 120 to 477 (IVAGGLLMGI…GDRAKVGKKA (358 aa)).

It is found in the cell inner membrane. It catalyses the reaction N(pros)-phospho-L-histidyl-[protein](out) + sucrose = sucrose 6(G)-phosphate(in) + L-histidyl-[protein]. In terms of biological role, the phosphoenolpyruvate-dependent sugar phosphotransferase system (sugar PTS), a major carbohydrate active transport system, catalyzes the phosphorylation of incoming sugar substrates concomitantly with their translocation across the cell membrane. This system is involved in sucrose transport. The sequence is that of PTS system sucrose-specific EIIBC component from Vibrio alginolyticus.